Reading from the N-terminus, the 131-residue chain is Small ribosomal subunit protein uS8 (131 aa).

This sequence belongs to the universal ribosomal protein uS8 family. As to quaternary structure, part of the 30S ribosomal subunit. Contacts proteins S5 and S12.

In terms of biological role, one of the primary rRNA binding proteins, it binds directly to 16S rRNA central domain where it helps coordinate assembly of the platform of the 30S subunit. The sequence is that of Small ribosomal subunit protein uS8 from Albidiferax ferrireducens (strain ATCC BAA-621 / DSM 15236 / T118) (Rhodoferax ferrireducens).